Here is a 424-residue protein sequence, read N- to C-terminus: Mitogen-activated protein kinase 9 (424 aa).

The region spanning 26–321 is the Protein kinase domain; that stretch reads YQQLKPIGSG…VDEALRHPYI (296 aa). ATP contacts are provided by residues 32 to 40 and K55; that span reads IGSGAQGIV. The active-site Proton acceptor is D151. T183 is modified (phosphothreonine; by MAP2K7). The TXY motif lies at 183–185; the sequence is TPY. Y185 is subject to Phosphotyrosine; by MAP2K4. The segment at 368–424 is disordered; that stretch reads KNGVVKDQPSDAAVSSNATPSQSSSINDISSMSTEQTLASDTDSSLDASTGPLEGCR. A compositionally biased stretch (low complexity) spans 388–417; sequence SQSSSINDISSMSTEQTLASDTDSSLDAST.

The protein belongs to the protein kinase superfamily. CMGC Ser/Thr protein kinase family. MAP kinase subfamily. In terms of assembly, interacts with MECOM. Interacts with DCLK2. Binds to at least four scaffolding proteins, MAPK8IP1/JIP-1, MAPK8IP2/JIP-2, MAPK8IP3/JIP-3/JSAP1 and SPAG9/MAPK8IP4/JIP-4. These proteins also bind other components of the JNK signaling pathway. Interacts with NFATC4. Interacts with ATF7; the interaction does not phosphorylate ATF7 but acts as a docking site for ATF7-associated partners such as JUN. Interacts with BCL10. Interacts with CTNNB1 and GSK3B. Interacts with MAPKBP1. Interacts with POU5F1; phosphorylates POU5F1 at 'Ser-355'. Found in a complex with SH3RF1, RAC2, MAP3K7/TAK1, MAP2K7/MKK7, MAPK8IP1/JIP1 and MAPK8/JNK1. It depends on Mg(2+) as a cofactor. Post-translationally, dually phosphorylated on Thr-183 and Tyr-185 by MAP2K7 and MAP2K4, which activates the enzyme. Autophosphorylated in vitro.

The protein localises to the cytoplasm. Its subcellular location is the nucleus. It carries out the reaction L-seryl-[protein] + ATP = O-phospho-L-seryl-[protein] + ADP + H(+). The enzyme catalyses L-threonyl-[protein] + ATP = O-phospho-L-threonyl-[protein] + ADP + H(+). With respect to regulation, activated by threonine and tyrosine phosphorylation by either of two dual specificity kinases, MAP2K4 and MAP2K7. MAP2K4 shows a strong preference for Tyr-185 while MAP2K7 phosphorylates Tyr-183 preferentially. Inhibited by dual specificity phosphatases, such as DUSP1. Its function is as follows. Serine/threonine-protein kinase involved in various processes such as cell proliferation, differentiation, migration, transformation and programmed cell death. Extracellular stimuli such as pro-inflammatory cytokines or physical stress stimulate the stress-activated protein kinase/c-Jun N-terminal kinase (SAP/JNK) signaling pathway. In this cascade, two dual specificity kinases MAP2K4/MKK4 and MAP2K7/MKK7 phosphorylate and activate MAPK9/JNK2. In turn, MAPK9/JNK2 phosphorylates a number of transcription factors, primarily components of AP-1 such as JUN and ATF2 and thus regulates AP-1 transcriptional activity. In response to oxidative or ribotoxic stresses, inhibits rRNA synthesis by phosphorylating and inactivating the RNA polymerase 1-specific transcription initiation factor RRN3. Promotes stressed cell apoptosis by phosphorylating key regulatory factors including TP53 and YAP1. In T-cells, MAPK8 and MAPK9 are required for polarized differentiation of T-helper cells into Th1 cells. Upon T-cell receptor (TCR) stimulation, is activated by CARMA1, BCL10, MAP2K7 and MAP3K7/TAK1 to regulate JUN protein levels. Plays an important role in the osmotic stress-induced epithelial tight-junctions disruption. When activated, promotes beta-catenin/CTNNB1 degradation and inhibits the canonical Wnt signaling pathway. Also participates in neurite growth in spiral ganglion neurons. Phosphorylates the CLOCK-BMAL1 heterodimer and plays a role in the regulation of the circadian clock. Phosphorylates POU5F1, which results in the inhibition of POU5F1's transcriptional activity and enhances its proteasomal degradation. Phosphorylates ALKBH5 in response to reactive oxygen species (ROS), promoting ALKBH5 sumoylation and inactivation. MAPK9 isoforms display different binding patterns: alpha-1 and alpha-2 preferentially bind to JUN, whereas beta-1 and beta-2 bind to ATF2. However, there is no correlation between binding and phosphorylation, which is achieved at about the same efficiency by all isoforms. JUNB is not a substrate for JNK2 alpha-2, and JUND binds only weakly to it. This chain is Mitogen-activated protein kinase 9 (MAPK9), found in Homo sapiens (Human).